Consider the following 749-residue polypeptide: uncharacterized protein (749 aa).

4 disordered regions span residues 1–58 (MGTV…QPSN), 124–170 (DANA…PSPL), 200–291 (SRFS…PPVS), and 385–405 (YTWS…NPST). Positions 13 to 24 (LNNGLSSNNGSS) are enriched in low complexity. Polar residues-rich tracts occupy residues 149 to 159 (KSASKDSNAFN), 238 to 252 (ESKT…PSLN), 265 to 275 (LNYQNSSLNPS), and 388 to 405 (SRHS…NPST). Residues 644–729 (KRILRKAQPH…YKTRIWMCAV (86 aa)) form the PSP1 C-terminal domain.

This is an uncharacterized protein from Schizosaccharomyces pombe (strain 972 / ATCC 24843) (Fission yeast).